The chain runs to 222 residues: Charged multivesicular body protein 2a (222 aa).

Residue methionine 1 is modified to N-acetylmethionine. The stretch at 12–53 (EELLRQNQRALNRAMRELDRERQKLETQEKKIIADIKKMAKQ) forms a coiled coil. Positions 56–222 (MDAVRIMAKD…EERLKNLRRD (167 aa)) are interaction with VPS4B. Serine 184 carries the post-translational modification Phosphoserine. Threonine 185 carries the phosphothreonine modification. Phosphoserine is present on residues serine 188, serine 190, and serine 203. Residues 195 to 222 (GKKAEAAASALADADADLEERLKNLRRD) adopt a coiled-coil conformation. Positions 210–220 (ADLEERLKNLR) match the MIT-interacting motif motif. The interval 217–222 (KNLRRD) is interaction with VTA1.

It belongs to the SNF7 family. As to quaternary structure, probable core component of the endosomal sorting required for transport complex III (ESCRT-III). ESCRT-III components are thought to multimerize to form a flat lattice on the perimeter membrane of the endosome. Several assembly forms of ESCRT-III may exist that interact and act sequentially. In vitro, heteromerizes with CHMP3 (but not CHMP4) to form helical tubular structures that expose membrane-interacting sites on the outside whereas VPS4B can associate on the inside of the tubule. Interacts with CHMP1B, CHMP2B, CHMP3, CHMP4A, CHMP4B, CHMP4C and CHMP5. Interacts with VPS4A; the interaction is direct. Interacts with VPS4B; the interaction is direct. Interacts with MITD1. Interacts with VTA1; the interaction probably involves the open conformation of CHMP2A. Post-translationally, ISGylated in a CHMP5-dependent manner. Isgylation weakens and inhibits its interactions with VPS4A and VTA1 respectively.

The protein localises to the late endosome membrane. It is found in the nucleus envelope. Probable core component of the endosomal sorting required for transport complex III (ESCRT-III) which is involved in multivesicular bodies (MVBs) formation and sorting of endosomal cargo proteins into MVBs. MVBs contain intraluminal vesicles (ILVs) that are generated by invagination and scission from the limiting membrane of the endosome and mostly are delivered to lysosomes enabling degradation of membrane proteins, such as stimulated growth factor receptors, lysosomal enzymes and lipids. The MVB pathway appears to require the sequential function of ESCRT-O, -I,-II and -III complexes. ESCRT-III proteins mostly dissociate from the invaginating membrane before the ILV is released. The ESCRT machinery also functions in topologically equivalent membrane fission events, such as the terminal stages of cytokinesis. Together with SPAST, the ESCRT-III complex promotes nuclear envelope sealing and mitotic spindle disassembly during late anaphase. Recruited to the reforming nuclear envelope (NE) during anaphase by LEMD2. ESCRT-III proteins are believed to mediate the necessary vesicle extrusion and/or membrane fission activities, possibly in conjunction with the AAA ATPase VPS4. Functionally, (Microbial infection) The ESCRT machinery functions in topologically equivalent membrane fission events, such as the budding of enveloped viruses (HIV-1 and other lentiviruses). Involved in HIV-1 p6- and p9-dependent virus release. In Homo sapiens (Human), this protein is Charged multivesicular body protein 2a (CHMP2A).